Here is a 263-residue protein sequence, read N- to C-terminus: Adaptin ear-binding coat-associated protein 2 (263 aa).

Disordered stretches follow at residues 167 to 191 and 209 to 263; these read KKEG…LPPP and GGSL…WVQF. Phosphoserine is present on S181. 2 short sequence motifs (WXXF motif) span residues 218 to 221 and 238 to 241; these read GSGG and DIWG. Residues 246 to 263 are compositionally biased toward low complexity; sequence STGSPSSQSQPGTGWVQF.

The protein belongs to the NECAP family. In terms of assembly, interacts with AP1G1 and AP2A1 components of the adapter protein complexes AP-1 and AP-2. Interacts with the GAE domain proteins GGA1, GGA2 and GGA3. Expressed in brain, heart, kidney, liver and lung (at protein level).

It is found in the cytoplasmic vesicle. The protein localises to the clathrin-coated vesicle membrane. Its subcellular location is the cell membrane. Involved in endocytosis. The sequence is that of Adaptin ear-binding coat-associated protein 2 (Necap2) from Rattus norvegicus (Rat).